The sequence spans 241 residues: N-acetylmuramoyl-L-alanine amidase Rv3717 (241 aa).

Residues 1–24 (MIVGVLVAAATPIISSASATPANI) form the signal peptide. The region spanning 29-230 (VFIDPGHNGA…KYANALVRGV (202 aa)) is the MurNAc-LAA domain. H35 contacts Zn(2+). Residues 45 to 69 (RQVPTGRGGTKNCQASGTSTNSGYP) form a disordered region. Residues 55–67 (KNCQASGTSTNSG) are compositionally biased toward polar residues. An intrachain disulfide couples C57 to C105. Residues E70 and H125 each contribute to the Zn(2+) site. The active-site Proton donor/acceptor is E200.

It belongs to the N-acetylmuramoyl-L-alanine amidase 3 family. As to quaternary structure, monomer. The cofactor is Zn(2+).

Its subcellular location is the periplasm. It catalyses the reaction Hydrolyzes the link between N-acetylmuramoyl residues and L-amino acid residues in certain cell-wall glycopeptides.. The protein operates within cell wall degradation; peptidoglycan degradation. With respect to regulation, the structure reveals a short flexible hairpin turn that partially occludes the active site and may be involved in autoregulation. Functionally, cell-wall hydrolase that hydrolyzes the amide bond between N-acetylmuramic acid and L-alanine in cell-wall glycopeptides. Is able to hydrolyze the cell walls of several bacterial species (i.e. Paenibacillus sp., B.avium, E.coli DH5alpha, E.aerogenes, L.acidophilus, B.thuringiensis, B.pumilus, B.subtilis and E.coli W3110), thereby showing that it is a cell-wall hydrolase with broad-spectrum activity. May have a role in peptidoglycan fragment recycling. This chain is N-acetylmuramoyl-L-alanine amidase Rv3717, found in Mycobacterium tuberculosis (strain ATCC 25618 / H37Rv).